A 206-amino-acid polypeptide reads, in one-letter code: Orotate phosphoribosyltransferase (206 aa).

Residues arginine 93, lysine 97, histidine 99, and glutamate 119 to threonine 127 each bind 5-phospho-alpha-D-ribose 1-diphosphate. Serine 123 is a binding site for orotate.

It belongs to the purine/pyrimidine phosphoribosyltransferase family. PyrE subfamily. As to quaternary structure, homodimer. Requires Mg(2+) as cofactor.

It catalyses the reaction orotidine 5'-phosphate + diphosphate = orotate + 5-phospho-alpha-D-ribose 1-diphosphate. It participates in pyrimidine metabolism; UMP biosynthesis via de novo pathway; UMP from orotate: step 1/2. Catalyzes the transfer of a ribosyl phosphate group from 5-phosphoribose 1-diphosphate to orotate, leading to the formation of orotidine monophosphate (OMP). The sequence is that of Orotate phosphoribosyltransferase from Bacillus caldolyticus.